A 1203-amino-acid chain; its full sequence is DNA-directed RNA polymerase subunit beta' (1203 aa).

Positions 60, 62, 75, and 78 each coordinate Zn(2+). Residues aspartate 449, aspartate 451, and aspartate 453 each coordinate Mg(2+). 4 residues coordinate Zn(2+): cysteine 818, cysteine 892, cysteine 899, and cysteine 902.

The protein belongs to the RNA polymerase beta' chain family. In terms of assembly, the RNAP catalytic core consists of 2 alpha, 1 beta, 1 beta' and 1 omega subunit. When a sigma factor is associated with the core the holoenzyme is formed, which can initiate transcription. Mg(2+) serves as cofactor. It depends on Zn(2+) as a cofactor.

It catalyses the reaction RNA(n) + a ribonucleoside 5'-triphosphate = RNA(n+1) + diphosphate. Functionally, DNA-dependent RNA polymerase catalyzes the transcription of DNA into RNA using the four ribonucleoside triphosphates as substrates. The polypeptide is DNA-directed RNA polymerase subunit beta' (Bacillus cereus (strain ATCC 10987 / NRS 248)).